A 146-amino-acid polypeptide reads, in one-letter code: Catabolic 3-dehydroquinase (146 aa).

Tyrosine 24 functions as the Proton acceptor in the catalytic mechanism. Residues asparagine 78, histidine 84, and aspartate 91 each contribute to the substrate site. Histidine 104 functions as the Proton donor in the catalytic mechanism. Substrate contacts are provided by residues 105–106 (IT) and arginine 115.

It belongs to the type-II 3-dehydroquinase family. As to quaternary structure, homododecamer. Adopts a ring-like structure, composed of an arrangement of two hexameric rings stacked on top of one another.

It catalyses the reaction 3-dehydroquinate = 3-dehydroshikimate + H2O. The protein operates within aromatic compound metabolism; 3,4-dihydroxybenzoate biosynthesis; 3,4-dihydroxybenzoate from 3-dehydroquinate: step 1/2. Is involved in the catabolism of quinate. Allows the utilization of quinate as carbon source via the beta-ketoadipate pathway. The polypeptide is Catabolic 3-dehydroquinase (Scheffersomyces stipitis (strain ATCC 58785 / CBS 6054 / NBRC 10063 / NRRL Y-11545) (Yeast)).